The following is a 142-amino-acid chain: Large ribosomal subunit protein uL13 (142 aa).

This sequence belongs to the universal ribosomal protein uL13 family. As to quaternary structure, part of the 50S ribosomal subunit.

This protein is one of the early assembly proteins of the 50S ribosomal subunit, although it is not seen to bind rRNA by itself. It is important during the early stages of 50S assembly. This is Large ribosomal subunit protein uL13 from Shigella boydii serotype 18 (strain CDC 3083-94 / BS512).